Here is a 336-residue protein sequence, read N- to C-terminus: Methionine synthase (336 aa).

Positions 210, 212, 234, and 294 each coordinate Zn(2+).

It belongs to the archaeal MetE family. Zn(2+) is required as a cofactor.

Its pathway is amino-acid biosynthesis; L-methionine biosynthesis via de novo pathway. In terms of biological role, catalyzes the transfer of a methyl group to L-homocysteine resulting in methionine formation. The physiological methyl donor is unknown. In Thermococcus kodakarensis (strain ATCC BAA-918 / JCM 12380 / KOD1) (Pyrococcus kodakaraensis (strain KOD1)), this protein is Methionine synthase.